Here is a 727-residue protein sequence, read N- to C-terminus: Synaptic vesicle glycoprotein 2C (727 aa).

The segment at 1-57 (MEDSYKDRTSLMKGAKDIAREVKKQTVKKVNQAVDRAQDEYTQRSYSRFQDEEDDDD) is interaction with SYT1. Topologically, residues 1-154 (MEDSYKDRTS…CGHGRFQWAL (154 aa)) are cytoplasmic. Disordered regions lie at residues 24–84 (KQTV…GHDE) and 109–128 (VGQPKGDEYKDRRELESERR). A phosphoserine mark is found at Ser-75 and Ser-76. Thr-79 is subject to Phosphothreonine. Basic and acidic residues predominate over residues 113–128 (KGDEYKDRRELESERR). The chain crosses the membrane as a helical span at residues 155–175 (FFVLGMALMADGVEVFVVGFV). Topologically, residues 176 to 191 (LPSAETDLCIPNSGSG) are extracellular. Residues 192 to 212 (WLGSIVYLGMMVGAFFWGGLA) traverse the membrane as a helical segment. Residues 213 to 226 (DKVGRKQSLLICMS) lie on the Cytoplasmic side of the membrane. The chain crosses the membrane as a helical span at residues 227 to 247 (VNGFFAFLSSFVQGYGFFLFC). Residue Arg-248 is a topological domain, extracellular. A helical transmembrane segment spans residues 249–269 (LLSGFGIGGAIPTVFSYFAEV). The Cytoplasmic portion of the chain corresponds to 270–280 (LAREKRGEHLS). The chain crosses the membrane as a helical span at residues 281–301 (WLCMFWMIGGIYASAMAWAII). Residues 302–320 (PHYGWSFSMGSAYQFHSWR) are Extracellular-facing. Residues 321-341 (VFVIVCALPCVSSVVALTFMP) traverse the membrane as a helical segment. The Cytoplasmic portion of the chain corresponds to 342 to 437 (ESPRFLLEVG…PVRDNTIKLT (96 aa)). A helical membrane pass occupies residues 438-458 (IVWFTLSFGYYGLSVWFPDVI). At 459-578 (KPLQSDEYAL…CQITFDDDYS (120 aa)) the chain is on the extracellular side. Tyr-466 carries the post-translational modification Phosphotyrosine. N-linked (GlcNAc...) asparagine glycans are attached at residues Asn-480, Asn-484, Asn-534, Asn-559, and Asn-565. Residues 519–563 (SCTFEDVTSVNTYFKNCTFIDTVFDNTDFEPYKFIDSEFKNCSFF) form a (Microbial infection) C.botulinum neurotoxin type A-binding region. A helical transmembrane segment spans residues 579–599 (AYWIYFVNFLGTLAVLPGNIV). Topologically, residues 600-609 (SALLMDRIGR) are cytoplasmic. A helical membrane pass occupies residues 610–630 (LTMLGGSMVLSGISCFFLWFG). Residues 631–636 (TSESMM) are Extracellular-facing. The helical transmembrane segment at 637–657 (IGMLCLYNGLTISAWNSLDVV) threads the bilayer. The Cytoplasmic segment spans residues 658–669 (TVELYPTDRRAT). Residues 670–690 (GFGFLNALCKAAAVLGNLIFG) form a helical membrane-spanning segment. Residues 691–698 (SLVSITKS) lie on the Extracellular side of the membrane. Residues 699–719 (IPILLASTVLVCGGLVGLCLP) form a helical membrane-spanning segment. Topologically, residues 720–727 (DTRTQVLM) are cytoplasmic.

It belongs to the major facilitator superfamily. As to quaternary structure, interacts with SYT1 in a calcium-dependent manner. (Microbial infection) Interacts with C.botulinum neurotoxin type A1 and type A2 (BoNT/A, botA). Interaction is improved by glycosylation of SV2. Post-translationally, N-glycosylated. Upon expression in a kidney cell line the most abundant glycan on Asn-534 is GlcNAc(3)Hex(5), while on Asn-559 and Asn-565 the most abundant glycan is GlcNAc2Fuc1Man3GlcNAc3Gal3. Both Asn-559 and Asn-565 have a high degree of glycan heterogeneity.

It localises to the cytoplasmic vesicle. The protein resides in the secretory vesicle. It is found in the synaptic vesicle membrane. In terms of biological role, plays a role in the control of regulated secretion in neural and endocrine cells, enhancing selectively low-frequency neurotransmission. Positively regulates vesicle fusion by maintaining the readily releasable pool of secretory vesicles. Functionally, (Microbial infection) Receptor for C.botulinum neurotoxin type A (BoNT/A, botA); the toxin probably binds via extracellular loop 4. Recognition by BoNT/A relies on both protein-protein and protein-N-glycosylation; glycosylation of Asn-559 increases its affinity for BoNT/A. Also serves as a receptor for the closely related C.botulinum neurotoxin type A2; glycosylation is not essential but enhances the interaction. Its function is as follows. (Microbial infection) Possible receptor for C.botulinum neurotoxin type D (BoNT/D, botD); note that type D does not usually infect humans. The polypeptide is Synaptic vesicle glycoprotein 2C (SV2C) (Homo sapiens (Human)).